The sequence spans 293 residues: Nucleotide-binding protein BcerKBAB4_4948 (293 aa).

ATP is bound at residue 14–21; it reads GMSGAGKT. 65 to 68 provides a ligand contact to GTP; sequence DLRG.

This sequence belongs to the RapZ-like family.

Displays ATPase and GTPase activities. This is Nucleotide-binding protein BcerKBAB4_4948 from Bacillus mycoides (strain KBAB4) (Bacillus weihenstephanensis).